Here is a 507-residue protein sequence, read N- to C-terminus: Sugar transport protein 6 (507 aa).

Over M1–Y20 the chain is Cytoplasmic. 12 helical membrane passes run V21–I41, F78–S98, I115–I135, L138–I158, G165–V185, I199–I219, F280–F300, L318–V338, F345–L365, L381–L401, G418–L438, and G447–I467. Residues P468 to A507 are Cytoplasmic-facing.

This sequence belongs to the major facilitator superfamily. Sugar transporter (TC 2.A.1.1) family. Pollen specific.

Its subcellular location is the membrane. Its activity is regulated as follows. Inhibited by uncouplers such as 2,4-dinitrophenol and carbonyl cyanide-m-chlorophenyl-hydrazone. Mediates an active uptake of hexoses, probably by sugar/hydrogen symport. Can transport glucose, 3-O-methylglucose, mannose, fructose and galactose, and, to a lower extent, xylose and ribulose. The polypeptide is Sugar transport protein 6 (STP6) (Arabidopsis thaliana (Mouse-ear cress)).